A 390-amino-acid polypeptide reads, in one-letter code: Phosphopentomutase (390 aa).

Mn(2+) is bound by residues Asp-14, Asp-286, His-291, Asp-327, His-328, and His-339.

It belongs to the phosphopentomutase family. Requires Mn(2+) as cofactor.

The protein localises to the cytoplasm. The catalysed reaction is 2-deoxy-alpha-D-ribose 1-phosphate = 2-deoxy-D-ribose 5-phosphate. It catalyses the reaction alpha-D-ribose 1-phosphate = D-ribose 5-phosphate. The protein operates within carbohydrate degradation; 2-deoxy-D-ribose 1-phosphate degradation; D-glyceraldehyde 3-phosphate and acetaldehyde from 2-deoxy-alpha-D-ribose 1-phosphate: step 1/2. Functionally, isomerase that catalyzes the conversion of deoxy-ribose 1-phosphate (dRib-1-P) and ribose 1-phosphate (Rib-1-P) to deoxy-ribose 5-phosphate (dRib-5-P) and ribose 5-phosphate (Rib-5-P), respectively. This is Phosphopentomutase from Exiguobacterium sibiricum (strain DSM 17290 / CCUG 55495 / CIP 109462 / JCM 13490 / 255-15).